The sequence spans 532 residues: Probable cytochrome c oxidase subunit 1 (532 aa).

The next 8 membrane-spanning stretches (helical) occupy residues 33–53 (IMYIIFAVFAGIVGGLFSLLF), 74–94 (VLITAHAVIMVFFMIMPALFG), 95–115 (GFGNYFVPLLIGAPDMAFPRL), 118–138 (ISFWLLVPAFLLLMGSAFVDG), 163–183 (MAIFSLHLTGLSSILGSINLI), 200–220 (PLFVWSILVTAFLIILAMPVL), 252–272 (LFWFFGHPEVYIVILPGFGIV), and 284–304 (IFGYQGMIGAMVIIGFVGFIV). Position 79 (histidine 79) interacts with Fe(II)-heme a. Residues histidine 258 and tyrosine 262 each contribute to the Cu cation site. The Cu cation site is built by histidine 307 and histidine 308. 2 helical membrane-spanning segments follow: residues 318–338 (ALIYFTAGTMIIAVPTGIKIF) and 355–375 (MLFSIGFIILFTIGGVTGIIL). Residue histidine 393 participates in heme a3 binding. 3 helical membrane passes run 394 to 414 (FHYTMSLGALFTAFAGFYYWF), 431 to 451 (FWITFIGVNLTFFPQHFLGLA), and 473 to 493 (IGAGISMFAALYFVFIVFYTL). Histidine 395 contributes to the Fe(II)-heme a binding site.

The protein belongs to the heme-copper respiratory oxidase family.

The protein resides in the cell membrane. It carries out the reaction 4 Fe(II)-[cytochrome c] + O2 + 8 H(+)(in) = 4 Fe(III)-[cytochrome c] + 2 H2O + 4 H(+)(out). The protein operates within energy metabolism; oxidative phosphorylation. Its function is as follows. Cytochrome c oxidase is the component of the respiratory chain that catalyzes the reduction of oxygen to water. Subunits 1-3 form the functional core of the enzyme complex. CO I is the catalytic subunit of the enzyme. Electrons originating in cytochrome c are transferred via the copper A center of subunit 2 and heme A of subunit 1 to the bimetallic center formed by heme A3 and copper B. This chain is Probable cytochrome c oxidase subunit 1 (ctaD), found in Rickettsia conorii (strain ATCC VR-613 / Malish 7).